Reading from the N-terminus, the 176-residue chain is RNA pyrophosphohydrolase (176 aa).

In terms of domain architecture, Nudix hydrolase spans 6–149 (GYRPNVGIIL…KRQVYQQALF (144 aa)). The short motif at 38 to 59 (GGIKHGESPEQAMFRELFEEVG) is the Nudix box element.

This sequence belongs to the Nudix hydrolase family. RppH subfamily. Requires a divalent metal cation as cofactor.

In terms of biological role, accelerates the degradation of transcripts by removing pyrophosphate from the 5'-end of triphosphorylated RNA, leading to a more labile monophosphorylated state that can stimulate subsequent ribonuclease cleavage. The polypeptide is RNA pyrophosphohydrolase (Aromatoleum aromaticum (strain DSM 19018 / LMG 30748 / EbN1) (Azoarcus sp. (strain EbN1))).